Reading from the N-terminus, the 179-residue chain is Protein GrpE (179 aa).

Positions 1-45 (MSEEKLTQDPTAEEEQTETADQQESADVNWEQEAAHWKAQAEEHQ) are disordered. A compositionally biased stretch (basic and acidic residues) spans 33–45 (EAAHWKAQAEEHQ).

Belongs to the GrpE family. Homodimer.

The protein localises to the cytoplasm. In terms of biological role, participates actively in the response to hyperosmotic and heat shock by preventing the aggregation of stress-denatured proteins, in association with DnaK and GrpE. It is the nucleotide exchange factor for DnaK and may function as a thermosensor. Unfolded proteins bind initially to DnaJ; upon interaction with the DnaJ-bound protein, DnaK hydrolyzes its bound ATP, resulting in the formation of a stable complex. GrpE releases ADP from DnaK; ATP binding to DnaK triggers the release of the substrate protein, thus completing the reaction cycle. Several rounds of ATP-dependent interactions between DnaJ, DnaK and GrpE are required for fully efficient folding. The polypeptide is Protein GrpE (Brevibacillus choshinensis).